Here is a 264-residue protein sequence, read N- to C-terminus: N-carbamoylsarcosine amidase (264 aa).

Cys177 (nucleophile) is an active-site residue. Positions 240–264 (TVPKTLSDPQPEVEAPADPVFAEQH) are disordered.

Homotetramer. The cofactor is sulfate.

It catalyses the reaction N-carbamoylsarcosine + H2O + 2 H(+) = sarcosine + NH4(+) + CO2. The protein operates within amine and polyamine degradation; creatinine degradation; sarcosine from creatinine: step 3/3. This chain is N-carbamoylsarcosine amidase, found in Arthrobacter sp.